A 124-amino-acid polypeptide reads, in one-letter code: UPF0299 membrane protein VIBHAR_02118 (124 aa).

Transmembrane regions (helical) follow at residues Leu6 to Gly26, Val35 to Leu55, Met72 to Ala92, and Leu95 to Phe115.

It belongs to the UPF0299 family.

Its subcellular location is the cell inner membrane. The chain is UPF0299 membrane protein VIBHAR_02118 from Vibrio campbellii (strain ATCC BAA-1116).